Reading from the N-terminus, the 71-residue chain is Large ribosomal subunit protein bL31 (71 aa).

Residues C16, C18, C37, and C40 each contribute to the Zn(2+) site.

This sequence belongs to the bacterial ribosomal protein bL31 family. Type A subfamily. In terms of assembly, part of the 50S ribosomal subunit. The cofactor is Zn(2+).

Functionally, binds the 23S rRNA. This is Large ribosomal subunit protein bL31 from Actinobacillus succinogenes (strain ATCC 55618 / DSM 22257 / CCUG 43843 / 130Z).